Consider the following 92-residue polypeptide: UPF0235 protein PYRAB05010 (92 aa).

Belongs to the UPF0235 family.

This chain is UPF0235 protein PYRAB05010, found in Pyrococcus abyssi (strain GE5 / Orsay).